Here is a 196-residue protein sequence, read N- to C-terminus: Small ribosomal subunit protein uS4c (196 aa).

A compositionally biased stretch (basic residues) spans 1–14 (MSRYRGPRLKKIRR). Residues 1 to 43 (MSRYRGPRLKKIRRLGALPGLTRKTPKSGSNPKKKFHSGKKEQ) are disordered. The 81-residue stretch at 89-169 (MRLDNILFRL…LPKHLTIDTL (81 aa)) folds into the S4 RNA-binding domain.

It belongs to the universal ribosomal protein uS4 family. Part of the 30S ribosomal subunit. Contacts protein S5. The interaction surface between S4 and S5 is involved in control of translational fidelity.

It is found in the plastid. It localises to the chloroplast. Functionally, one of the primary rRNA binding proteins, it binds directly to 16S rRNA where it nucleates assembly of the body of the 30S subunit. In terms of biological role, with S5 and S12 plays an important role in translational accuracy. The protein is Small ribosomal subunit protein uS4c (rps4) of Melica uniflora (Wood melick grass).